A 306-amino-acid polypeptide reads, in one-letter code: N-acetylmuramic acid 6-phosphate etherase (306 aa).

The SIS domain occupies 55-218; sequence IVPRMKKGGR…STGVMIKLGK (164 aa). E83 serves as the catalytic Proton donor. Residue E114 is part of the active site.

Belongs to the GCKR-like family. MurNAc-6-P etherase subfamily. As to quaternary structure, homodimer.

It catalyses the reaction N-acetyl-D-muramate 6-phosphate + H2O = N-acetyl-D-glucosamine 6-phosphate + (R)-lactate. The protein operates within amino-sugar metabolism; N-acetylmuramate degradation. Its function is as follows. Specifically catalyzes the cleavage of the D-lactyl ether substituent of MurNAc 6-phosphate, producing GlcNAc 6-phosphate and D-lactate. The polypeptide is N-acetylmuramic acid 6-phosphate etherase (Caldanaerobacter subterraneus subsp. tengcongensis (strain DSM 15242 / JCM 11007 / NBRC 100824 / MB4) (Thermoanaerobacter tengcongensis)).